We begin with the raw amino-acid sequence, 474 residues long: tRNA-2-methylthio-N(6)-dimethylallyladenosine synthase (474 aa).

In terms of domain architecture, MTTase N-terminal spans 3-120 (QKLHIKTWGC…LPEMINQIRA (118 aa)). 6 residues coordinate [4Fe-4S] cluster: cysteine 12, cysteine 49, cysteine 83, cysteine 157, cysteine 161, and cysteine 164. Positions 143–375 (KAEGPTAFVS…QQRINNQAAQ (233 aa)) constitute a Radical SAM core domain. The 64-residue stretch at 378 to 441 (RAMLGTEQRV…TNSLRGDVVR (64 aa)) folds into the TRAM domain.

The protein belongs to the methylthiotransferase family. MiaB subfamily. As to quaternary structure, monomer. The cofactor is [4Fe-4S] cluster.

The protein resides in the cytoplasm. The catalysed reaction is N(6)-dimethylallyladenosine(37) in tRNA + (sulfur carrier)-SH + AH2 + 2 S-adenosyl-L-methionine = 2-methylsulfanyl-N(6)-dimethylallyladenosine(37) in tRNA + (sulfur carrier)-H + 5'-deoxyadenosine + L-methionine + A + S-adenosyl-L-homocysteine + 2 H(+). Catalyzes the methylthiolation of N6-(dimethylallyl)adenosine (i(6)A), leading to the formation of 2-methylthio-N6-(dimethylallyl)adenosine (ms(2)i(6)A) at position 37 in tRNAs that read codons beginning with uridine. This is tRNA-2-methylthio-N(6)-dimethylallyladenosine synthase from Mannheimia succiniciproducens (strain KCTC 0769BP / MBEL55E).